We begin with the raw amino-acid sequence, 473 residues long: Ribulose bisphosphate carboxylase large chain (473 aa).

2 residues coordinate substrate: Asn-116 and Thr-166. Lys-168 serves as the catalytic Proton acceptor. A substrate-binding site is contributed by Lys-170. Positions 194, 196, and 197 each coordinate Mg(2+). Lys-194 bears the N6-carboxylysine mark. Residue His-287 is the Proton acceptor of the active site. Substrate contacts are provided by Arg-288, His-320, and Ser-372.

It belongs to the RuBisCO large chain family. Type I subfamily. Heterohexadecamer of 8 large chains and 8 small chains. Mg(2+) serves as cofactor.

The catalysed reaction is 2 (2R)-3-phosphoglycerate + 2 H(+) = D-ribulose 1,5-bisphosphate + CO2 + H2O. It catalyses the reaction D-ribulose 1,5-bisphosphate + O2 = 2-phosphoglycolate + (2R)-3-phosphoglycerate + 2 H(+). Its function is as follows. RuBisCO catalyzes two reactions: the carboxylation of D-ribulose 1,5-bisphosphate, the primary event in carbon dioxide fixation, as well as the oxidative fragmentation of the pentose substrate. Both reactions occur simultaneously and in competition at the same active site. The sequence is that of Ribulose bisphosphate carboxylase large chain from Nitrobacter winogradskyi (Nitrobacter agilis).